Reading from the N-terminus, the 311-residue chain is Putative F-box protein At1g31090 (311 aa).

Positions 4–53 constitute an F-box domain; sequence GANSDSIPTDLIYEILSRLSVKPITRFRCVSKLWESIICRQDFTELFHNR. The interval 287-311 is disordered; the sequence is RPAEQNTSTSSREDHLVRTVKRKRA.

This chain is Putative F-box protein At1g31090, found in Arabidopsis thaliana (Mouse-ear cress).